Reading from the N-terminus, the 591-residue chain is Aspartate--tRNA(Asp/Asn) ligase (591 aa).

Position 176 (E176) interacts with L-aspartate. An aspartate region spans residues 200 to 203 (QLFK). R222 serves as a coordination point for L-aspartate. ATP contacts are provided by residues 222 to 224 (RDE) and Q231. Residue H450 coordinates L-aspartate. E484 lines the ATP pocket. R491 lines the L-aspartate pocket. Residue 536–539 (GLDR) participates in ATP binding.

It belongs to the class-II aminoacyl-tRNA synthetase family. Type 1 subfamily. In terms of assembly, homodimer.

The protein localises to the cytoplasm. The catalysed reaction is tRNA(Asx) + L-aspartate + ATP = L-aspartyl-tRNA(Asx) + AMP + diphosphate. Functionally, aspartyl-tRNA synthetase with relaxed tRNA specificity since it is able to aspartylate not only its cognate tRNA(Asp) but also tRNA(Asn). Reaction proceeds in two steps: L-aspartate is first activated by ATP to form Asp-AMP and then transferred to the acceptor end of tRNA(Asp/Asn). In Bacillus cereus (strain G9842), this protein is Aspartate--tRNA(Asp/Asn) ligase.